A 381-amino-acid chain; its full sequence is cAMP-dependent protein kinase type I-alpha regulatory subunit (381 aa).

M1 is subject to N-acetylmethionine. The segment at 1–135 (MESGSTAASE…AALAKAIEKN (135 aa)) is dimerization and phosphorylation. Position 3 is a phosphoserine (S3). The disordered stretch occupies residues 64 to 96 (QIQNLQKAGTRTDSREDEISPPPPNPVVKGRRR). T75 carries the phosphothreonine modification. S77 and S83 each carry phosphoserine. The short motif at 96-100 (RRGAI) is the Pseudophosphorylation motif element. The residue at position 101 (S101) is a Phosphoserine. 3',5'-cyclic AMP is bound by residues 137-254 (LFSH…SKVS), E202, R211, 255-381 (ILES…SLSV), E326, and R335. S258 carries the phosphoserine modification.

This sequence belongs to the cAMP-dependent kinase regulatory chain family. The inactive holoenzyme is composed of two regulatory chains and two catalytic chains. Activation by cAMP releases the two active catalytic monomers and the regulatory dimer. Interacts with PRKACA and PRKACB. PRKAR1A also interacts with RFC2; the complex may be involved in cell survival. Interacts with AKAP4. Interacts with RARA; the interaction occurs in the presence of cAMP or FSH and regulates RARA transcriptional activity. Interacts with the phosphorylated form of PJA2. Interacts with CBFA2T3. Interacts with PRKX; regulates this cAMP-dependent protein kinase. Interacts with smAKAP; this interaction may target PRKAR1A to the plasma membrane. Interacts with AICDA. In terms of processing, the pseudophosphorylation site binds to the substrate-binding region of the catalytic chain, resulting in the inhibition of its activity.

It is found in the cell membrane. In terms of biological role, regulatory subunit of the cAMP-dependent protein kinases involved in cAMP signaling in cells. This is cAMP-dependent protein kinase type I-alpha regulatory subunit (PRKAR1A) from Pongo abelii (Sumatran orangutan).